The sequence spans 274 residues: Shikimate kinase (274 aa).

86 to 96 (PVGKGLKSSSA) contributes to the ATP binding site.

This sequence belongs to the GHMP kinase family. Archaeal shikimate kinase subfamily.

Its subcellular location is the cytoplasm. It catalyses the reaction shikimate + ATP = 3-phosphoshikimate + ADP + H(+). Its pathway is metabolic intermediate biosynthesis; chorismate biosynthesis; chorismate from D-erythrose 4-phosphate and phosphoenolpyruvate: step 5/7. This Pyrococcus abyssi (strain GE5 / Orsay) protein is Shikimate kinase (aroK).